The primary structure comprises 664 residues: Protein-arginine deiminase type-3 (664 aa).

This sequence belongs to the protein arginine deiminase family. Requires Ca(2+) as cofactor. Epidermis and hair follicles.

The protein localises to the cytoplasm. The enzyme catalyses L-arginyl-[protein] + H2O = L-citrullyl-[protein] + NH4(+). Catalyzes the deimination of arginine residues of proteins. This chain is Protein-arginine deiminase type-3 (Padi3), found in Mus musculus (Mouse).